We begin with the raw amino-acid sequence, 384 residues long: MDIADQTFVKKVNQKLLLKEILKNSPISRAKLSEMTGLNKSTVSSQVNTLMKESMVFEIGQGQSSGGRRPVMLVFNKKAGYSVGIDVGVDYINGILTDLEGTIVLDQYRHLESNSPEITKDILIDMIHHFITQMPQSPYGLIGIGICVPGLIDKDQKIVFTPNSNWRDIDLKSSIQEKYNVPVFIENEANAGAYGEKVFGAAKNHDNIIYVSISTGIGIGVIINNHLYRGVSGFSGEMGHMTIDFNGPKCSCGNRGCWELYASEKALLKSLQTKEKKLSYQDIINLAHLNDIGTLNALQNFGFYLGIGLTNILNTFNPQAVILRNSIIESHPMVLNSMRSEVSSRVYSQLGNSYELLPSSLGQNAPALGMSSIVIDHFLDMITM.

A DNA-binding region (H-T-H motif) is located at residues 29–48; sequence RAKLSEMTGLNKSTVSSQVN.

The protein belongs to the ROK (NagC/XylR) family.

Its function is as follows. Transcriptional repressor of xylose-utilizing enzymes. In Bacillus subtilis (strain 168), this protein is Xylose repressor (xylR).